A 510-amino-acid polypeptide reads, in one-letter code: ATP synthase subunit alpha (510 aa).

Residue 169-176 (GDRQTGKT) coordinates ATP.

The protein belongs to the ATPase alpha/beta chains family. As to quaternary structure, F-type ATPases have 2 components, CF(1) - the catalytic core - and CF(0) - the membrane proton channel. CF(1) has five subunits: alpha(3), beta(3), gamma(1), delta(1), epsilon(1). CF(0) has three main subunits: a(1), b(2) and c(9-12). The alpha and beta chains form an alternating ring which encloses part of the gamma chain. CF(1) is attached to CF(0) by a central stalk formed by the gamma and epsilon chains, while a peripheral stalk is formed by the delta and b chains.

Its subcellular location is the cell inner membrane. The catalysed reaction is ATP + H2O + 4 H(+)(in) = ADP + phosphate + 5 H(+)(out). Produces ATP from ADP in the presence of a proton gradient across the membrane. The alpha chain is a regulatory subunit. This is ATP synthase subunit alpha from Rickettsia felis (strain ATCC VR-1525 / URRWXCal2) (Rickettsia azadi).